Here is a 338-residue protein sequence, read N- to C-terminus: Ketol-acid reductoisomerase (NADP(+)) (338 aa).

The KARI N-terminal Rossmann domain maps to 1–181; sequence MKVYYDKDCD…GGGRTGIIET (181 aa). NADP(+) contacts are provided by residues 24-27, Arg47, Ser50, Ser52, and 82-85; these read YGSQ and DEFQ. His107 is a catalytic residue. Gly133 contacts NADP(+). A KARI C-terminal knotted domain is found at 182 to 327; the sequence is TFKDETETDL…EKLRTMMPWI (146 aa). Mg(2+) is bound by residues Asp190, Glu194, Glu226, and Glu230. Ser251 provides a ligand contact to substrate.

This sequence belongs to the ketol-acid reductoisomerase family. The cofactor is Mg(2+).

The enzyme catalyses (2R)-2,3-dihydroxy-3-methylbutanoate + NADP(+) = (2S)-2-acetolactate + NADPH + H(+). It catalyses the reaction (2R,3R)-2,3-dihydroxy-3-methylpentanoate + NADP(+) = (S)-2-ethyl-2-hydroxy-3-oxobutanoate + NADPH + H(+). It participates in amino-acid biosynthesis; L-isoleucine biosynthesis; L-isoleucine from 2-oxobutanoate: step 2/4. The protein operates within amino-acid biosynthesis; L-valine biosynthesis; L-valine from pyruvate: step 2/4. In terms of biological role, involved in the biosynthesis of branched-chain amino acids (BCAA). Catalyzes an alkyl-migration followed by a ketol-acid reduction of (S)-2-acetolactate (S2AL) to yield (R)-2,3-dihydroxy-isovalerate. In the isomerase reaction, S2AL is rearranged via a Mg-dependent methyl migration to produce 3-hydroxy-3-methyl-2-ketobutyrate (HMKB). In the reductase reaction, this 2-ketoacid undergoes a metal-dependent reduction by NADPH to yield (R)-2,3-dihydroxy-isovalerate. The sequence is that of Ketol-acid reductoisomerase (NADP(+)) from Azotobacter vinelandii (strain DJ / ATCC BAA-1303).